The chain runs to 354 residues: UDP-N-acetylglucosamine--N-acetylmuramyl-(pentapeptide) pyrophosphoryl-undecaprenol N-acetylglucosamine transferase (354 aa).

UDP-N-acetyl-alpha-D-glucosamine-binding positions include 11–13, Arg-164, Ser-194, and Gln-289; that span reads TAG.

It belongs to the glycosyltransferase 28 family. MurG subfamily.

Its subcellular location is the cell membrane. It catalyses the reaction di-trans,octa-cis-undecaprenyl diphospho-N-acetyl-alpha-D-muramoyl-L-alanyl-D-glutamyl-meso-2,6-diaminopimeloyl-D-alanyl-D-alanine + UDP-N-acetyl-alpha-D-glucosamine = di-trans,octa-cis-undecaprenyl diphospho-[N-acetyl-alpha-D-glucosaminyl-(1-&gt;4)]-N-acetyl-alpha-D-muramoyl-L-alanyl-D-glutamyl-meso-2,6-diaminopimeloyl-D-alanyl-D-alanine + UDP + H(+). It functions in the pathway cell wall biogenesis; peptidoglycan biosynthesis. Functionally, cell wall formation. Catalyzes the transfer of a GlcNAc subunit on undecaprenyl-pyrophosphoryl-MurNAc-pentapeptide (lipid intermediate I) to form undecaprenyl-pyrophosphoryl-MurNAc-(pentapeptide)GlcNAc (lipid intermediate II). This Clostridium botulinum (strain Langeland / NCTC 10281 / Type F) protein is UDP-N-acetylglucosamine--N-acetylmuramyl-(pentapeptide) pyrophosphoryl-undecaprenol N-acetylglucosamine transferase.